Here is a 196-residue protein sequence, read N- to C-terminus: ATP-dependent Clp protease proteolytic subunit (196 aa).

Serine 101 acts as the Nucleophile in catalysis. Residue histidine 126 is part of the active site.

This sequence belongs to the peptidase S14 family. As to quaternary structure, component of the chloroplastic Clp protease core complex.

The protein localises to the plastid. The protein resides in the chloroplast stroma. The enzyme catalyses Hydrolysis of proteins to small peptides in the presence of ATP and magnesium. alpha-casein is the usual test substrate. In the absence of ATP, only oligopeptides shorter than five residues are hydrolyzed (such as succinyl-Leu-Tyr-|-NHMec, and Leu-Tyr-Leu-|-Tyr-Trp, in which cleavage of the -Tyr-|-Leu- and -Tyr-|-Trp bonds also occurs).. In terms of biological role, cleaves peptides in various proteins in a process that requires ATP hydrolysis. Has a chymotrypsin-like activity. Plays a major role in the degradation of misfolded proteins. This chain is ATP-dependent Clp protease proteolytic subunit, found in Morus indica (Mulberry).